A 135-amino-acid chain; its full sequence is uncharacterized protein (135 aa).

Residues 1 to 80 (MRSSSLPGAR…QRGSCASANA (80 aa)) are disordered. The segment covering 54–65 (GARGGGRRGWGG) has biased composition (gly residues).

This is an uncharacterized protein from Homo sapiens (Human).